Consider the following 1596-residue polypeptide: Protein son of sevenless (1596 aa).

The region spanning 248 to 434 (TYEETVKELI…HPLHCDLEKV (187 aa)) is the DH domain. Positions 480-588 (EFIREDSLSK…WMADLLMVIT (109 aa)) constitute a PH domain. The 156-residue stretch at 637–792 (GVPMIKGATL…SVLKIVQRKN (156 aa)) folds into the N-terminal Ras-GEF domain. The 238-residue stretch at 829–1066 (HPLELARQLT…YNESLRIEPR (238 aa)) folds into the Ras-GEF domain. 5 disordered regions span residues 1073-1105 (KFPR…LSNS), 1175-1212 (RNTS…AHVW), 1235-1291 (EHLP…TAST), 1340-1392 (RAVP…NHST), and 1465-1596 (PLPI…TNEE). A compositionally biased stretch (low complexity) spans 1096–1105 (TNSSSKLSNS). 2 stretches are compositionally biased toward polar residues: residues 1175 to 1195 (RNTS…NNGE) and 1280 to 1291 (MQNSPTHSTAST). A compositionally biased stretch (basic and acidic residues) spans 1352–1366 (ERTESCADMAQKRQA). Positions 1469–1489 (SPAASSSTTTSPLTPAMSPMS) are enriched in low complexity. The span at 1526–1542 (HHQHHATHLPHHPHQHH) shows a compositional bias: basic residues. 2 positions are modified to phosphoserine: Ser-1550 and Ser-1551.

May form a complex with sevenless and DRK.

In terms of biological role, promotes the exchange of Ras-bound GDP by GTP. Functions in signaling pathways initiated by the sevenless and epidermal growth factor receptor tyrosine kinases; implies a role for the ras pathway in neuronal development. This Drosophila melanogaster (Fruit fly) protein is Protein son of sevenless (Sos).